Reading from the N-terminus, the 623-residue chain is Chaperone protein DnaK (623 aa).

A Phosphothreonine; by autocatalysis modification is found at threonine 174. 2 disordered regions span residues isoleucine 470 to valine 504 and glycine 578 to lysine 623. A compositionally biased stretch (basic and acidic residues) spans glutamate 481–valine 504. Low complexity predominate over residues glycine 578 to serine 604. Basic and acidic residues predominate over residues glycine 614 to lysine 623.

This sequence belongs to the heat shock protein 70 family.

Its function is as follows. Acts as a chaperone. This Lactobacillus gasseri (strain ATCC 33323 / DSM 20243 / BCRC 14619 / CIP 102991 / JCM 1131 / KCTC 3163 / NCIMB 11718 / NCTC 13722 / AM63) protein is Chaperone protein DnaK.